The primary structure comprises 569 residues: Sulfite reductase [NADPH] hemoprotein beta-component (569 aa).

Residues Cys-433, Cys-439, Cys-478, and Cys-482 each coordinate [4Fe-4S] cluster. Cys-482 serves as a coordination point for siroheme.

The protein belongs to the nitrite and sulfite reductase 4Fe-4S domain family. As to quaternary structure, alpha(8)-beta(8). The alpha component is a flavoprotein, the beta component is a hemoprotein. Requires siroheme as cofactor. [4Fe-4S] cluster is required as a cofactor.

The catalysed reaction is hydrogen sulfide + 3 NADP(+) + 3 H2O = sulfite + 3 NADPH + 4 H(+). It participates in sulfur metabolism; hydrogen sulfide biosynthesis; hydrogen sulfide from sulfite (NADPH route): step 1/1. Component of the sulfite reductase complex that catalyzes the 6-electron reduction of sulfite to sulfide. This is one of several activities required for the biosynthesis of L-cysteine from sulfate. The protein is Sulfite reductase [NADPH] hemoprotein beta-component of Buchnera aphidicola subsp. Acyrthosiphon pisum (strain Tuc7).